We begin with the raw amino-acid sequence, 329 residues long: Quinone oxidoreductase (329 aa).

Alanine 2 is modified (N-acetylalanine). At lysine 23 the chain carries N6-acetyllysine. NADP(+)-binding positions include tyrosine 53, 158–161 (SGGV), glycine 181, histidine 200, asparagine 229, 246–249 (VGCR), and 269–271 (VSL). Lysine 296 is modified (N6-succinyllysine).

This sequence belongs to the zinc-containing alcohol dehydrogenase family. Quinone oxidoreductase subfamily. Homotetramer.

It is found in the cytoplasm. The catalysed reaction is 2 a quinone + NADPH + H(+) = 2 a 1,4-benzosemiquinone + NADP(+). Its function is as follows. Does not have alcohol dehydrogenase activity. Binds NADP and acts through a one-electron transfer process. Orthoquinones, such as 1,2-naphthoquinone or 9,10-phenanthrenequinone, are the best substrates (in vitro). May act in the detoxification of xenobiotics. Interacts with (AU)-rich elements (ARE) in the 3'-UTR of target mRNA species and enhances their stability. NADPH binding interferes with mRNA binding. This chain is Quinone oxidoreductase (Cryz), found in Rattus norvegicus (Rat).